A 315-amino-acid polypeptide reads, in one-letter code: Tetratricopeptide repeat protein 23-like (315 aa).

Residues 28-56 are disordered; that stretch reads KIPEHQRTDESSPTSGSEESEEDTKAKEK. Coiled coils occupy residues 65–90, 179–200, and 250–280; these read REKL…ANKE, REAY…ESYK, and SELV…HQAH.

The protein resides in the cytoplasm. Its subcellular location is the cytoskeleton. It localises to the microtubule organizing center. The protein localises to the centrosome. It is found in the spindle. The protein resides in the midbody. This Bos taurus (Bovine) protein is Tetratricopeptide repeat protein 23-like (TTC23L).